Here is an 812-residue protein sequence, read N- to C-terminus: MAGTVVLDDVELREAQRDYLDFLDDEEDQGIYQNKVRELISDNQYRLIVSVNDLRRKNEKRANRLLNNAFEELVAFQRALKDFVASIDATYAKQYEEFYIGLEGSFGSKHVSPRTLTSCFLSCVVCVEGIVTKCSLVRPKVVRSVHYCPATKKTIERRYSDLTTLVAFPSSSVYPTKDEENNPLETEYGLSVYKDHQTITIQEMPEKAPAGQLPRSVDVILDDDLVDKVKPGDRIQVVGTYRCLPGKKGCYTSGTFRTVLIACNVKQMSKDIQPAFSADDIAKIKKFSKTRSKDVFEQLARSLAPSIHGHDYVKKAILCLLLGGVERELENGSHIRGDINILLIGDPSVAKSQLLRYVLCTAPRAIPTTGRGSSGVGLTAAVTTDQETGERRLEAGAMVLADRGVVCIDEFDKMSDMDRTAIHEVMEQGRVTIAKAGIHARLNARCSVLAAANPVYGRYDQYKTPMENIGLQDSLLSRFDLLFIMLDQMDPEQDREISDHVLRMHQYRAPGEQDGDALPLGSSVDILATDDPDFTQDDQQDTRIYEKHDSLLHGTKKKKEKMVSAAFMKKYIHVAKIIKPTLTQESAAYIAEEYSRLRSQDSMSSDTARTSPVTARTLETLIRLATAHAKARMSKTVDLQDAEEAVELVQYAYFKKVLEKEKKRKKASEDESDLEDEEEKSQEDTEQKRKRRKTHAKDGESYDPYDFSEAETQMPQVHTPKTDDSQEKTDDSQETQDSQKVELSEPRLKAFKAALLEVFQEAHEQSVGMLHLTESINRNREEPFSSEEIQACLSRMQDDNQVMVSEGIVFLI.

A2 carries the post-translational modification N-acetylalanine. Position 160 is a phosphoserine (S160). K293 carries the N6-acetyllysine modification. Positions 295–502 constitute an MCM domain; it reads VFEQLARSLA…QDREISDHVL (208 aa). 5 residues coordinate ADP: Q353, L393, E394, A395, and A397. The Arginine finger signature appears at 477-480; that stretch reads SRFD. K547 is modified (N6-acetyllysine). S611 carries the post-translational modification Phosphoserine. Residue R664 coordinates ATP. Residues 664-744 form a disordered region; sequence RKKASEDESD…TQDSQKVELS (81 aa). Phosphoserine occurs at positions 668, 672, and 681. A compositionally biased stretch (acidic residues) spans 670–681; it reads DESDLEDEEEKS. Y705 carries the phosphotyrosine modification. S708 bears the Phosphoserine mark. A phosphothreonine mark is found at T719, T722, and T729. A compositionally biased stretch (basic and acidic residues) spans 720–744; sequence PKTDDSQEKTDDSQETQDSQKVELS. S732 and S738 each carry phosphoserine.

It belongs to the MCM family. In terms of assembly, component of the MCM2-7 complex. The complex forms a toroidal hexameric ring with the proposed subunit order MCM2-MCM6-MCM4-MCM7-MCM3-MCM5. Component of the CMG helicase complex, a hexameric ring of related MCM2-7 subunits stabilized by CDC45 and the tetrameric GINS complex. Associated with the replication-specific DNA polymerase alpha. Interacts with MCMBP. Interacts with ANKRD17. Interacts with MCM3AP; this interaction leads to MCM3 acetylation. In terms of processing, acetylated by MCM3AP. O-glycosylated (O-GlcNAcylated), in a cell cycle-dependent manner.

It is found in the nucleus. Its subcellular location is the chromosome. It carries out the reaction ATP + H2O = ADP + phosphate + H(+). In terms of biological role, acts as a component of the MCM2-7 complex (MCM complex) which is the replicative helicase essential for 'once per cell cycle' DNA replication initiation and elongation in eukaryotic cells. Core component of CDC45-MCM-GINS (CMG) helicase, the molecular machine that unwinds template DNA during replication, and around which the replisome is built. The active ATPase sites in the MCM2-7 ring are formed through the interaction surfaces of two neighboring subunits such that a critical structure of a conserved arginine finger motif is provided in trans relative to the ATP-binding site of the Walker A box of the adjacent subunit. The six ATPase active sites, however, are likely to contribute differentially to the complex helicase activity. Required for the entry in S phase and for cell division. In Mus musculus (Mouse), this protein is DNA replication licensing factor MCM3 (Mcm3).